The sequence spans 181 residues: uncharacterized protein (181 aa).

The tract at residues 25–47 (ELANEVSAGDEEPYDDDIWESED) is disordered. The span at 32–47 (AGDEEPYDDDIWESED) shows a compositional bias: acidic residues. The helical transmembrane segment at 149 to 169 (ILTLILLSCGLLMLFIGYPIL) threads the bilayer.

Its subcellular location is the cytoplasm. It localises to the membrane. This is an uncharacterized protein from Schizosaccharomyces pombe (strain 972 / ATCC 24843) (Fission yeast).